The chain runs to 440 residues: Suppressor of cytokine signaling 4 (440 aa).

The span at 1 to 11 (MAENSESNSKN) shows a compositional bias: polar residues. The disordered stretch occupies residues 1–29 (MAENSESNSKNVDVRPKTSRSRSADRKDG). Positions 12-29 (VDVRPKTSRSRSADRKDG) are enriched in basic and acidic residues. The SH2 domain occupies 286-381 (CYWGVMDKYA…FFEPLLSTPL (96 aa)). Residues 376–425 (LLSTPLIRTFPFSLQHICRTVICNCTTYDGIDALPIPSSMKLYLKEYHYK) form the SOCS box domain.

It functions in the pathway protein modification; protein ubiquitination. Functionally, SOCS family proteins form part of a classical negative feedback system that regulates cytokine signal transduction. Substrate-recognition component of a SCF-like ECS (Elongin BC-CUL2/5-SOCS-box protein) E3 ubiquitin-protein ligase complex which mediates the ubiquitination and subsequent proteasomal degradation of target proteins. Inhibits EGF signaling by mediating the degradation of the Tyr-phosphorylated EGF receptor/EGFR. In Bos taurus (Bovine), this protein is Suppressor of cytokine signaling 4 (SOCS4).